We begin with the raw amino-acid sequence, 328 residues long: Ribosomal RNA small subunit methyltransferase H (328 aa).

S-adenosyl-L-methionine-binding positions include 35 to 37, aspartate 60, phenylalanine 87, aspartate 113, and glutamine 120; that span reads GSH.

The protein belongs to the methyltransferase superfamily. RsmH family.

Its subcellular location is the cytoplasm. The catalysed reaction is cytidine(1402) in 16S rRNA + S-adenosyl-L-methionine = N(4)-methylcytidine(1402) in 16S rRNA + S-adenosyl-L-homocysteine + H(+). Its function is as follows. Specifically methylates the N4 position of cytidine in position 1402 (C1402) of 16S rRNA. The chain is Ribosomal RNA small subunit methyltransferase H from Chlorobium chlorochromatii (strain CaD3).